Reading from the N-terminus, the 295-residue chain is ER-localized J domain-containing protein 5 (295 aa).

The signal sequence occupies residues 1–20; it reads MNGYWKPALVVLGLVSLSYA. Topologically, residues 21 to 130 are lumenal; the sequence is FTTIETEIFQ…GFYFSRMKPK (110 aa). The J domain maps to 42-110; the sequence is DMNFYKFLKL…RKIYDYYLQN (69 aa). A helical transmembrane segment spans residues 131–151; it reads TWFLLAFIWIVVNIGQYIISI. The Cytoplasmic segment spans residues 152 to 295; sequence IQYRSQRSRI…PNGKVIYSRK (144 aa). The tract at residues 259–287 is disordered; the sequence is KYDGNQTKKGNKVKKGSAKKGQKKMELPN. Positions 267-280 are enriched in basic residues; that stretch reads KGNKVKKGSAKKGQ.

This sequence belongs to the DnaJ family.

It is found in the endoplasmic reticulum membrane. DnaJ-like chaperone required for the folding capacity of the endoplasmic reticulum. This chain is ER-localized J domain-containing protein 5 (ERJ5), found in Saccharomyces cerevisiae (strain ATCC 204508 / S288c) (Baker's yeast).